The following is a 403-amino-acid chain: Eukaryotic initiation factor 4A (403 aa).

Positions 1–20 (MDDRNEIPQDGPASMEPEGV) are disordered. The Q motif motif lies at 30–58 (DNFDDMNLREELLRGIYGYGFEKPSAIQQ). The Helicase ATP-binding domain occupies 61–231 (IIPCVRGRDV…RCFMRDPVSI (171 aa)). Position 74-81 (74-81 (AQSGTGKT)) interacts with ATP. The DEAD box signature appears at 179–182 (DEAD). The 162-residue stretch at 242 to 403 (GIKQFYVNVK…EMPANIADLI (162 aa)) folds into the Helicase C-terminal domain.

This sequence belongs to the DEAD box helicase family. eIF4A subfamily. EIF4F is a multi-subunit complex, the composition of which varies with external and internal environmental conditions. It is composed of at least eIF4A, eIF4E1 and eIF4G1. Interacts with tud and vas. Interacts (via multiple contacts) with bam; the interaction is direct.

Its subcellular location is the cytoplasm. The protein localises to the cytoplasmic ribonucleoprotein granule. The enzyme catalyses ATP + H2O = ADP + phosphate + H(+). Its function is as follows. ATP-dependent RNA helicase which is a subunit of the eIF4F complex involved in cap recognition and is required for mRNA binding to ribosome. In the current model of translation initiation, eIF4A unwinds RNA secondary structures in the 5'-UTR of mRNAs which is necessary to allow efficient binding of the small ribosomal subunit, and subsequent scanning for the initiator codon. As a result, promotes cell proliferation and growth. Binds and antagonises the bam-bgcn complex; probably prevents bam mediated translational repression of shg/E-cadherin. Involved in germ cell formation. Involved in germline stem cell maintenance and proliferation; prevents differentiation. The sequence is that of Eukaryotic initiation factor 4A from Drosophila melanogaster (Fruit fly).